A 447-amino-acid chain; its full sequence is UPF0210 protein Ldb1026 (447 aa).

Belongs to the UPF0210 family. As to quaternary structure, homodimer.

The protein is UPF0210 protein Ldb1026 of Lactobacillus delbrueckii subsp. bulgaricus (strain ATCC 11842 / DSM 20081 / BCRC 10696 / JCM 1002 / NBRC 13953 / NCIMB 11778 / NCTC 12712 / WDCM 00102 / Lb 14).